A 249-amino-acid chain; its full sequence is Isoprenyl transferase (249 aa).

Residue aspartate 25 is part of the active site. Aspartate 25 provides a ligand contact to Mg(2+). Substrate-binding positions include 26–29, tryptophan 30, arginine 38, histidine 42, and 70–72; these read GNGR and STE. The active-site Proton acceptor is the asparagine 73. Residues tryptophan 74, arginine 76, arginine 197, and 203 to 205 contribute to the substrate site; that span reads RLS. Glutamate 216 lines the Mg(2+) pocket.

The protein belongs to the UPP synthase family. As to quaternary structure, homodimer. The cofactor is Mg(2+).

Functionally, catalyzes the condensation of isopentenyl diphosphate (IPP) with allylic pyrophosphates generating different type of terpenoids. The polypeptide is Isoprenyl transferase (Streptococcus mutans serotype c (strain ATCC 700610 / UA159)).